A 388-amino-acid chain; its full sequence is Processive diacylglycerol beta-glucosyltransferase (388 aa).

It belongs to the glycosyltransferase 28 family. UgtP subfamily.

Its subcellular location is the cell membrane. It catalyses the reaction a 1,2-diacyl-3-O-(beta-D-glucopyranosyl)-sn-glycerol + UDP-alpha-D-glucose = a 1,2-diacyl-3-O-(beta-D-Glc-(1-&gt;6)-beta-D-Glc)-sn-glycerol + UDP + H(+). The catalysed reaction is a 1,2-diacyl-3-O-(beta-D-Glc-(1-&gt;6)-beta-D-Glc)-sn-glycerol + UDP-alpha-D-glucose = a 1,2-diacyl-3-O-(beta-D-Glc-(1-&gt;6)-beta-D-Glc-(1-&gt;6)-beta-D-Glc)-sn-glycerol + UDP + H(+). It carries out the reaction a 1,2-diacyl-sn-glycerol + UDP-alpha-D-glucose = a 1,2-diacyl-3-O-(beta-D-glucopyranosyl)-sn-glycerol + UDP + H(+). The protein operates within glycolipid metabolism; diglucosyl-diacylglycerol biosynthesis. Processive glucosyltransferase involved in the biosynthesis of both the bilayer- and non-bilayer-forming membrane glucolipids. Is able to successively transfer up to three glucosyl residues to diacylglycerol (DAG), thereby catalyzing the formation of beta-monoglucosyl-DAG (3-O-(beta-D-glucopyranosyl)-1,2-diacyl-sn-glycerol), beta-diglucosyl-DAG (3-O-(beta-D-glucopyranosyl-beta-(1-&gt;6)-D-glucopyranosyl)-1,2-diacyl-sn-glycerol) and beta-triglucosyl-DAG (3-O-(beta-D-glucopyranosyl-beta-(1-&gt;6)-D-glucopyranosyl-beta-(1-&gt;6)-D-glucopyranosyl)-1,2-diacyl-sn-glycerol). Beta-diglucosyl-DAG is the predominant glycolipid found in Bacillales and is also used as a membrane anchor for lipoteichoic acid (LTA). This chain is Processive diacylglycerol beta-glucosyltransferase, found in Bacillus cytotoxicus (strain DSM 22905 / CIP 110041 / 391-98 / NVH 391-98).